The sequence spans 594 residues: MMETPNNDSSRTPDEAAGAPDPESARYVANELSVADRQVNILRDKLRHIDRQLAAATQNNSKLVGMLETAKAEILRLKNALDQEGQPPYSFGTILQLNPKRQPTAGNSGQAATEESVDIFNAGRKMRVGVSPLVNMNQLAVGQEVLLNEALLVVAGLGYERAGELVTLKEMLGTDRALVVGRADEERVIRLSGALMSEKLRVGDALSIDSRTGYALEKVPRSEVENLVLEEVPDITYEDIGGLGPQIEQIRDAVELPFLHPDLYREHGLKAPKGILLYGPPGCGKTLIAKAVANSLAARAAERTGNVDLKSYFLNIKGPELLDKYVGETERHIRLIFSRAREKASDGSPVVVFFDEMDSLFRTRGTGISSDVETTIVPQLLSEIDGVERLDNVIVIGASNREDMIDPAILRPGRLDVKVKIQRPDAEAAADIFYKYITTDLPFHESDLAEHSGDVQATVDAMIQRTVEAMYSTEKSNEYLEVTYANGDTEMLYFKDFNSGAVVQNVVDRAKKYAIKDLLTTQQKGLRIDHLLRAVVDEFREHEDMPNTTNPDDWARISGKKGERITYIRTIVQGKAGQEPGKSIETMPSTGQYL.

The span at 1-10 shows a compositional bias: polar residues; it reads MMETPNNDSS. Residues 1–23 are disordered; that stretch reads MMETPNNDSSRTPDEAAGAPDPE. The stretch at 35-86 forms a coiled coil; it reads ADRQVNILRDKLRHIDRQLAAATQNNSKLVGMLETAKAEILRLKNALDQEGQ. Residue 282-287 coordinates ATP; sequence GCGKTL. A docks into pockets in the proteasome alpha-ring region spans residues 593–594; the sequence is YL.

Belongs to the AAA ATPase family. In terms of assembly, homohexamer. Assembles into a hexameric ring structure that caps the 20S proteasome core. Strongly interacts with the prokaryotic ubiquitin-like protein Pup through a hydrophobic interface; the interacting region of ARC lies in its N-terminal coiled-coil domain. There is one Pup binding site per ARC hexamer ring. Upon ATP-binding, the C-terminus of ARC interacts with the alpha-rings of the proteasome core, possibly by binding to the intersubunit pockets.

The protein operates within protein degradation; proteasomal Pup-dependent pathway. Functionally, ATPase which is responsible for recognizing, binding, unfolding and translocation of pupylated proteins into the bacterial 20S proteasome core particle. May be essential for opening the gate of the 20S proteasome via an interaction with its C-terminus, thereby allowing substrate entry and access to the site of proteolysis. Thus, the C-termini of the proteasomal ATPase may function like a 'key in a lock' to induce gate opening and therefore regulate proteolysis. This Arthrobacter sp. (strain FB24) protein is Proteasome-associated ATPase.